The chain runs to 194 residues: ATP-dependent Clp protease proteolytic subunit (194 aa).

Serine 97 (nucleophile) is an active-site residue. Histidine 122 is an active-site residue.

This sequence belongs to the peptidase S14 family. In terms of assembly, fourteen ClpP subunits assemble into 2 heptameric rings which stack back to back to give a disk-like structure with a central cavity, resembling the structure of eukaryotic proteasomes.

Its subcellular location is the cytoplasm. The catalysed reaction is Hydrolysis of proteins to small peptides in the presence of ATP and magnesium. alpha-casein is the usual test substrate. In the absence of ATP, only oligopeptides shorter than five residues are hydrolyzed (such as succinyl-Leu-Tyr-|-NHMec, and Leu-Tyr-Leu-|-Tyr-Trp, in which cleavage of the -Tyr-|-Leu- and -Tyr-|-Trp bonds also occurs).. Its function is as follows. Cleaves peptides in various proteins in a process that requires ATP hydrolysis. Has a chymotrypsin-like activity. Plays a major role in the degradation of misfolded proteins. This chain is ATP-dependent Clp protease proteolytic subunit, found in Lactobacillus delbrueckii subsp. bulgaricus (strain ATCC BAA-365 / Lb-18).